Here is a 262-residue protein sequence, read N- to C-terminus: MGLIRVLANLLILQLSYAQKSSELVIGGDECNINEHRFLAIVHTDISLCTGTLINQEWVLTAAHCDGGNMDIYLGVHNESVRYDDEEGRVPAEKFFCLSSRNFTKWDKDIMLIRLNIPVRNSAHIAPLSLPSSPPSVGSVCRVMGWGTITSPNETYPDVPHCANINLFDYEVCLAAYPEFGLPATSKTLCAGILEGGKDTCVGDAGGPLICNGQFQGILSWGDDPCAQPRLPAVYTKVFDHLDWIQSIIAGNTDATCPFVNF.

The first 18 residues, 1–18, serve as a signal peptide directing secretion; it reads MGLIRVLANLLILQLSYA. A propeptide spanning residues 19-24 is cleaved from the precursor; the sequence is QKSSEL. The Peptidase S1 domain occupies 25 to 250; that stretch reads VIGGDECNIN…HLDWIQSIIA (226 aa). 6 disulfide bridges follow: Cys-31–Cys-162, Cys-49–Cys-65, Cys-97–Cys-257, Cys-141–Cys-211, Cys-173–Cys-190, and Cys-201–Cys-226. N-linked (GlcNAc...) asparagine glycans are attached at residues Asn-78, Asn-102, and Asn-153.

The protein belongs to the peptidase S1 family. Snake venom subfamily. As to quaternary structure, monomer. In terms of tissue distribution, expressed by the venom gland.

It localises to the secreted. The polypeptide is Inactive snake venom serine proteinase 13 (Crotalus adamanteus (Eastern diamondback rattlesnake)).